Reading from the N-terminus, the 784-residue chain is Probable leucine-rich repeat receptor-like protein kinase IMK3 (784 aa).

The signal sequence occupies residues 1–48 (MEFITQNQAITSLSMINTDIDQPKASLRSRFLLHLIICLLFFVPPCSS). The Extracellular portion of the chain corresponds to 49–409 (QAWDGVVITQ…PSHRNLSTKD (361 aa)). The N-linked (GlcNAc...) asparagine glycan is linked to N82. LRR repeat units lie at residues 126–148 (ALRKLSLHDNNLGGSIPMSLGLI), 150–172 (NLRGVQLFNNRLTGSIPASLGVS), 174–197 (FLQTLDLSNNLLSEIIPPNLADSS), 198–220 (KLLRLNLSFNSLSGQIPVSLSRS), 222–242 (SLQFLALDHNNLSGPILDTWG), 247–268 (NLRVLSLDHNSLSGPFPFSLCN), 271–294 (QLQDFSFSHNRIRGTLPSELSKLT), 295–317 (KLRKMDISGNSVSGHIPETLGNI), 319–342 (SLIHLDLSQNKLTGEIPISISDLE), and 343–365 (SLNFFNVSYNNLSGPVPTLLSQK). Residues N203, N232, and N268 are each glycosylated (N-linked (GlcNAc...) asparagine). The N-linked (GlcNAc...) asparagine glycan is linked to N316. N-linked (GlcNAc...) asparagine glycans are attached at residues N348, N353, N367, and N404. A helical transmembrane segment spans residues 410–430 (IILIASGALLIVMLILVCVLC). Over 431–784 (CLLRKKANET…VPEASASTSQ (354 aa)) the chain is Cytoplasmic. Positions 441-467 (KAKGGEAGPGAVAAKTEKGGEAEAGGE) are disordered. Positions 488-773 (CATAEIMGKS…TTATTSEPLI (286 aa)) constitute a Protein kinase domain. ATP is bound by residues 494–502 (MGKSTYGTV) and K516. The interval 760-784 (RPEETTATTSEPLIDVPEASASTSQ) is disordered.

Belongs to the protein kinase superfamily. Ser/Thr protein kinase family. In terms of assembly, interacts with AGL24. In terms of processing, autophosphorylated. In terms of tissue distribution, expressed in meristems, including roots, vegetative, inflorescence and floral meristems, and in embryos.

The protein localises to the cell membrane. It carries out the reaction L-seryl-[protein] + ATP = O-phospho-L-seryl-[protein] + ADP + H(+). It catalyses the reaction L-threonyl-[protein] + ATP = O-phospho-L-threonyl-[protein] + ADP + H(+). Can phosphorylate AGL24. This chain is Probable leucine-rich repeat receptor-like protein kinase IMK3 (IMK3), found in Arabidopsis thaliana (Mouse-ear cress).